A 307-amino-acid polypeptide reads, in one-letter code: Yop proteins translocation protein Q (307 aa).

It belongs to the FliN/MopA/SpaO family.

In terms of biological role, component of the Yop secretion machinery. This Yersinia pestis protein is Yop proteins translocation protein Q (yscQ).